The chain runs to 496 residues: Probable glycine dehydrogenase (decarboxylating) subunit 2 (496 aa).

At Lys265 the chain carries N6-(pyridoxal phosphate)lysine.

This sequence belongs to the GcvP family. C-terminal subunit subfamily. In terms of assembly, the glycine cleavage system is composed of four proteins: P, T, L and H. In this organism, the P 'protein' is a heterodimer of two subunits. It depends on pyridoxal 5'-phosphate as a cofactor.

It catalyses the reaction N(6)-[(R)-lipoyl]-L-lysyl-[glycine-cleavage complex H protein] + glycine + H(+) = N(6)-[(R)-S(8)-aminomethyldihydrolipoyl]-L-lysyl-[glycine-cleavage complex H protein] + CO2. Its function is as follows. The glycine cleavage system catalyzes the degradation of glycine. The P protein binds the alpha-amino group of glycine through its pyridoxal phosphate cofactor; CO(2) is released and the remaining methylamine moiety is then transferred to the lipoamide cofactor of the H protein. The chain is Probable glycine dehydrogenase (decarboxylating) subunit 2 from Thioalkalivibrio sulfidiphilus (strain HL-EbGR7).